The primary structure comprises 657 residues: UvrABC system protein B (657 aa).

Positions 23–414 (KSIKKGNKYQ…KENIFHQIMR (392 aa)) constitute a Helicase ATP-binding domain. 36-43 (GVTGSGKT) is an ATP binding site. Positions 89 to 112 (YYDYYQPEAYIPRTDVFIEKDSST) match the Beta-hairpin motif. Residues 431–593 (QVEILFDEAK…ITPTSVKRHI (163 aa)) form the Helicase C-terminal domain. In terms of domain architecture, UVR spans 622–657 (AKLVKELRKQMLEAAKALEFEKAAAIRDEINKLRDL).

The protein belongs to the UvrB family. As to quaternary structure, forms a heterotetramer with UvrA during the search for lesions. Interacts with UvrC in an incision complex.

The protein localises to the cytoplasm. The UvrABC repair system catalyzes the recognition and processing of DNA lesions. A damage recognition complex composed of 2 UvrA and 2 UvrB subunits scans DNA for abnormalities. Upon binding of the UvrA(2)B(2) complex to a putative damaged site, the DNA wraps around one UvrB monomer. DNA wrap is dependent on ATP binding by UvrB and probably causes local melting of the DNA helix, facilitating insertion of UvrB beta-hairpin between the DNA strands. Then UvrB probes one DNA strand for the presence of a lesion. If a lesion is found the UvrA subunits dissociate and the UvrB-DNA preincision complex is formed. This complex is subsequently bound by UvrC and the second UvrB is released. If no lesion is found, the DNA wraps around the other UvrB subunit that will check the other stand for damage. This chain is UvrABC system protein B, found in Campylobacter jejuni subsp. jejuni serotype O:2 (strain ATCC 700819 / NCTC 11168).